A 396-amino-acid chain; its full sequence is Elongation factor Tu (396 aa).

The 197-residue stretch at 10 to 206 (KPHVNIGTIG…AVDESVPDPV (197 aa)) folds into the tr-type G domain. The G1 stretch occupies residues 19-26 (GHVDHGKT). Position 19–26 (19–26 (GHVDHGKT)) interacts with GTP. Mg(2+) is bound at residue T26. The G2 stretch occupies residues 62–66 (GITIN). A G3 region spans residues 83–86 (DAPG). GTP-binding positions include 83–87 (DAPGH) and 138–141 (NKAD). The tract at residues 138-141 (NKAD) is G4. The interval 176 to 178 (SGL) is G5.

The protein belongs to the TRAFAC class translation factor GTPase superfamily. Classic translation factor GTPase family. EF-Tu/EF-1A subfamily. As to quaternary structure, monomer.

It localises to the cytoplasm. It catalyses the reaction GTP + H2O = GDP + phosphate + H(+). GTP hydrolase that promotes the GTP-dependent binding of aminoacyl-tRNA to the A-site of ribosomes during protein biosynthesis. This is Elongation factor Tu from Arthrobacter sp. (strain FB24).